Here is a 448-residue protein sequence, read N- to C-terminus: Clusterin (448 aa).

The N-terminal stretch at 1 to 21 (MKILLLCVALLLIWDNGMVLG) is a signal peptide. Residues 77–80 (KKKK) carry the Nuclear localization signal motif. Intrachain disulfides connect cysteine 101–cysteine 312, cysteine 112–cysteine 304, cysteine 115–cysteine 301, cysteine 120–cysteine 294, and cysteine 128–cysteine 284. N-linked (GlcNAc...) asparagine glycosylation is present at asparagine 102. Serine 132 carries the post-translational modification Phosphoserine. Residues asparagine 144, asparagine 290, asparagine 327, asparagine 353, and asparagine 373 are each glycosylated (N-linked (GlcNAc...) asparagine). Serine 395 is modified (phosphoserine). The Nuclear localization signal signature appears at 442–446 (RRKSR).

It belongs to the clusterin family. In terms of assembly, antiparallel disulfide-linked heterodimer of an alpha chain and a beta chain. Self-associates and forms higher oligomers. Interacts with a broad range of misfolded proteins, including APP, APOC2 and LYZ. Slightly acidic pH promotes interaction with misfolded proteins. Forms high-molecular weight oligomers upon interaction with misfolded proteins. Interacts with APOA1, LRP2, CLUAP1 and PON1. Interacts with the complement membrane attack complex. Interacts (via alpha chain) with XRCC6. Interacts with SYVN1, COMMD1, BTRC, CUL1 and with ubiquitin and SCF (SKP1-CUL1-F-box protein) E3 ubiquitin-protein ligase complexes. Interacts (via alpha chain) with BAX in stressed cells, where BAX undergoes a conformation change leading to association with the mitochondrial membrane. Does not interact with BAX in unstressed cells. Found in a complex with LTF, CLU, EPPIN and SEMG1. Interacts (immaturely glycosylated pre-secreted form) with HSPA5; this interaction promotes CLU stability and facilitates stress-induced CLU retrotranslocation from the secretory pathway to the mitochondria, thereby reducing stress-induced apoptosis by stabilizing mitochondrial membrane integrity. Interacts with BCL2L1; this interaction releases and activates BAX and promotes cell death. Interacts with TGFBR2 and ACVR1. Interacts (secreted form) with STMN3; this interaction may act as an important modulator during neuronal differentiation. Interacts with VLDLR and LRP8. Post-translationally, proteolytically cleaved on its way through the secretory system, probably within the Golgi lumen. Proteolytic cleavage is not necessary for its chaperone activity. All non-secreted forms are not proteolytically cleaved. Chaperone activity of uncleaved forms is dependent on a non-reducing environment. Polyubiquitinated, leading to proteasomal degradation. Under cellular stress, the intracellular level of cleaved form is reduced due to proteasomal degradation. In terms of processing, extensively glycosylated with sulfated N-linked carbohydrates. About 30% of the protein mass is comprised of complex N-linked carbohydrate. Endoplasmic reticulum (ER) stress induces changes in glycosylation status and increases level of hypoglycosylated forms. Core carbohydrates are essential for chaperone activity. Non-secreted forms are hypoglycosylated or unglycosylated. As to expression, most abundant in stomach, liver, brain, and testis, with intermediate levels in heart, ovary and kidney.

Its subcellular location is the secreted. The protein localises to the nucleus. The protein resides in the cytoplasm. It localises to the mitochondrion membrane. It is found in the cytosol. Its subcellular location is the microsome. The protein localises to the endoplasmic reticulum. The protein resides in the mitochondrion. It localises to the perinuclear region. It is found in the cytoplasmic vesicle. Its subcellular location is the secretory vesicle. The protein localises to the chromaffin granule. In terms of biological role, functions as extracellular chaperone that prevents aggregation of non native proteins. Prevents stress-induced aggregation of blood plasma proteins. Inhibits formation of amyloid fibrils by APP, APOC2, B2M, CALCA, CSN3, SNCA and aggregation-prone LYZ variants (in vitro). Does not require ATP. Maintains partially unfolded proteins in a state appropriate for subsequent refolding by other chaperones, such as HSPA8/HSC70. Does not refold proteins by itself. Binding to cell surface receptors triggers internalization of the chaperone-client complex and subsequent lysosomal or proteasomal degradation. When secreted, protects cells against apoptosis and against cytolysis by complement: inhibits assembly of the complement membrane attack complex (MAC) by preventing polymerization of C9 pore component of the MAC complex. Intracellular forms interact with ubiquitin and SCF (SKP1-CUL1-F-box protein) E3 ubiquitin-protein ligase complexes and promote the ubiquitination and subsequent proteasomal degradation of target proteins. Promotes proteasomal degradation of COMMD1 and IKBKB. Modulates NF-kappa-B transcriptional activity. Following stress, promotes apoptosis. Inhibits apoptosis when associated with the mitochondrial membrane by interference with BAX-dependent release of cytochrome c into the cytoplasm. Plays a role in the regulation of cell proliferation. Following ER stress, suppresses stress-induced apoptosis by stabilizing mitochondrial membrane integrity through interaction with HSPA5. When secreted, does not affect caspase or BAX-mediated intrinsic apoptosis and TNF-induced NF-kappa-B-activity. When secreted, acts as an important modulator during neuronal differentiation through interaction with STMN3. Plays a role in the clearance of immune complexes that arise during cell injury. The chain is Clusterin from Mus musculus (Mouse).